Consider the following 244-residue polypeptide: Phosphoadenosine 5'-phosphosulfate reductase (244 aa).

Cys239 acts as the Nucleophile; cysteine thiosulfonate intermediate in catalysis.

It belongs to the PAPS reductase family. CysH subfamily.

It localises to the cytoplasm. It catalyses the reaction [thioredoxin]-disulfide + sulfite + adenosine 3',5'-bisphosphate + 2 H(+) = [thioredoxin]-dithiol + 3'-phosphoadenylyl sulfate. It participates in sulfur metabolism; hydrogen sulfide biosynthesis; sulfite from sulfate: step 3/3. Catalyzes the formation of sulfite from phosphoadenosine 5'-phosphosulfate (PAPS) using thioredoxin as an electron donor. The protein is Phosphoadenosine 5'-phosphosulfate reductase of Zymomonas mobilis subsp. mobilis (strain ATCC 31821 / ZM4 / CP4).